Here is a 331-residue protein sequence, read N- to C-terminus: Ferrochelatase (331 aa).

His-187 and Glu-286 together coordinate Fe cation.

This sequence belongs to the ferrochelatase family.

The protein localises to the cytoplasm. The catalysed reaction is heme b + 2 H(+) = protoporphyrin IX + Fe(2+). It participates in porphyrin-containing compound metabolism; protoheme biosynthesis; protoheme from protoporphyrin-IX: step 1/1. Catalyzes the ferrous insertion into protoporphyrin IX. This is Ferrochelatase from Legionella pneumophila (strain Lens).